Reading from the N-terminus, the 225-residue chain is Urease subunit alpha (225 aa).

The segment at 1-102 (MRLTPKELDK…LVTIHNPIED (102 aa)) is urease gamma. Residues 103 to 225 (NGKLTPGEYI…ANAAQKHFIH (123 aa)) form a urease beta region.

This sequence in the N-terminal section; belongs to the urease gamma subunit family. The protein in the C-terminal section; belongs to the urease beta subunit family. Heterohexamer of 3 UreA (alpha) and 3 UreB (beta) subunits.

Its subcellular location is the cytoplasm. The catalysed reaction is urea + 2 H2O + H(+) = hydrogencarbonate + 2 NH4(+). Its pathway is nitrogen metabolism; urea degradation; CO(2) and NH(3) from urea (urease route): step 1/1. The sequence is that of Urease subunit alpha from Helicobacter hepaticus (strain ATCC 51449 / 3B1).